We begin with the raw amino-acid sequence, 343 residues long: Protein RecA (343 aa).

65–72 contributes to the ATP binding site; that stretch reads GPESSGKT.

Belongs to the RecA family.

Its subcellular location is the cytoplasm. Can catalyze the hydrolysis of ATP in the presence of single-stranded DNA, the ATP-dependent uptake of single-stranded DNA by duplex DNA, and the ATP-dependent hybridization of homologous single-stranded DNAs. It interacts with LexA causing its activation and leading to its autocatalytic cleavage. This Pseudoalteromonas atlantica (strain T6c / ATCC BAA-1087) protein is Protein RecA.